The sequence spans 592 residues: Syntaxin-binding protein 3 (592 aa).

The segment at 1-255 (MAPPVAERGL…STVLHELTFQ (255 aa)) is mediates interaction with DOC2B.

The protein belongs to the STXBP/unc-18/SEC1 family. In terms of assembly, interacts with DOC2B; the interaction is direct, occurs at the cell membrane, excludes interaction with STX4 and regulates glucose-stimulated insulin secretion. Interacts with STX4. Post-translationally, phosphorylated by PKC in platelets in response to thrombin stimulation; phosphorylation inhibits binding to STX4. Megakaryocytes and platelets.

The protein resides in the cytoplasm. The protein localises to the cytosol. It localises to the cell membrane. Together with STX4 and VAMP2, may play a role in insulin-dependent movement of GLUT4 and in docking/fusion of intracellular GLUT4-containing vesicles with the cell surface in adipocytes. The polypeptide is Syntaxin-binding protein 3 (STXBP3) (Homo sapiens (Human)).